A 178-amino-acid chain; its full sequence is ATP synthase subunit delta (178 aa).

Belongs to the ATPase delta chain family. F-type ATPases have 2 components, F(1) - the catalytic core - and F(0) - the membrane proton channel. F(1) has five subunits: alpha(3), beta(3), gamma(1), delta(1), epsilon(1). F(0) has three main subunits: a(1), b(2) and c(10-14). The alpha and beta chains form an alternating ring which encloses part of the gamma chain. F(1) is attached to F(0) by a central stalk formed by the gamma and epsilon chains, while a peripheral stalk is formed by the delta and b chains.

It is found in the cell inner membrane. In terms of biological role, f(1)F(0) ATP synthase produces ATP from ADP in the presence of a proton or sodium gradient. F-type ATPases consist of two structural domains, F(1) containing the extramembraneous catalytic core and F(0) containing the membrane proton channel, linked together by a central stalk and a peripheral stalk. During catalysis, ATP synthesis in the catalytic domain of F(1) is coupled via a rotary mechanism of the central stalk subunits to proton translocation. This protein is part of the stalk that links CF(0) to CF(1). It either transmits conformational changes from CF(0) to CF(1) or is implicated in proton conduction. This is ATP synthase subunit delta from Acinetobacter baumannii (strain AB307-0294).